A 332-amino-acid polypeptide reads, in one-letter code: tRNA-dihydrouridine(20/20a) synthase (332 aa).

Residues 19–21 and Q71 contribute to the FMN site; that span reads PML. Residue C101 is the Proton donor of the active site. FMN is bound by residues K140, H173, 213–215, and 235–236; these read NGG and GR.

This sequence belongs to the Dus family. DusA subfamily. Requires FMN as cofactor.

The catalysed reaction is 5,6-dihydrouridine(20) in tRNA + NADP(+) = uridine(20) in tRNA + NADPH + H(+). It catalyses the reaction 5,6-dihydrouridine(20) in tRNA + NAD(+) = uridine(20) in tRNA + NADH + H(+). It carries out the reaction 5,6-dihydrouridine(20a) in tRNA + NADP(+) = uridine(20a) in tRNA + NADPH + H(+). The enzyme catalyses 5,6-dihydrouridine(20a) in tRNA + NAD(+) = uridine(20a) in tRNA + NADH + H(+). Catalyzes the synthesis of 5,6-dihydrouridine (D), a modified base found in the D-loop of most tRNAs, via the reduction of the C5-C6 double bond in target uridines. Specifically modifies U20 and U20a in tRNAs. This Salmonella typhi protein is tRNA-dihydrouridine(20/20a) synthase.